The sequence spans 691 residues: DNA ligase (691 aa).

NAD(+)-binding positions include 41–45 (DAEYD), 90–91 (SL), and E130. K132 functions as the N6-AMP-lysine intermediate in the catalytic mechanism. R153, E190, K307, and K331 together coordinate NAD(+). 4 residues coordinate Zn(2+): C425, C428, C443, and C449. The region spanning 610–691 (APQGVLAGKT…MHTLLEGHAR (82 aa)) is the BRCT domain.

Belongs to the NAD-dependent DNA ligase family. LigA subfamily. The cofactor is Mg(2+). Requires Mn(2+) as cofactor.

It catalyses the reaction NAD(+) + (deoxyribonucleotide)n-3'-hydroxyl + 5'-phospho-(deoxyribonucleotide)m = (deoxyribonucleotide)n+m + AMP + beta-nicotinamide D-nucleotide.. Functionally, DNA ligase that catalyzes the formation of phosphodiester linkages between 5'-phosphoryl and 3'-hydroxyl groups in double-stranded DNA using NAD as a coenzyme and as the energy source for the reaction. It is essential for DNA replication and repair of damaged DNA. This Burkholderia pseudomallei (strain 1710b) protein is DNA ligase.